We begin with the raw amino-acid sequence, 843 residues long: Protein P (843 aa).

Positions 1–177 are terminal protein domain (TP); it reads MPLSYPHFRK…FCGSPYSWEQ (177 aa). A spacer region spans residues 178–346; it reads ELQHGSTSLN…YCLSHIINLL (169 aa). Residues 284 to 308 are disordered; that stretch reads EANPSLSTSKRHTSTGNAVELNPVP. Positions 347–690 are polymerase/reverse transcriptase domain (RT); sequence EDWGPCYEHG…YMNLYPVARQ (344 aa). Positions 357-600 constitute a Reverse transcriptase domain; the sequence is QHHIRTPRTP…YNLHFMGYVI (244 aa). D429, D551, and D552 together coordinate Mg(2+).

Belongs to the hepadnaviridae P protein family.

The catalysed reaction is DNA(n) + a 2'-deoxyribonucleoside 5'-triphosphate = DNA(n+1) + diphosphate. The enzyme catalyses Endonucleolytic cleavage to 5'-phosphomonoester.. With respect to regulation, activated by host HSP70 and HSP40 in vitro to be able to bind the epsilon loop of the pgRNA. Because deletion of the RNase H region renders the protein partly chaperone-independent, the chaperones may be needed indirectly to relieve occlusion of the RNA-binding site by this domain. Inhibited by several reverse-transcriptase inhibitors: Lamivudine, Adefovir and Entecavir. Functionally, multifunctional enzyme that converts the viral RNA genome into dsDNA in viral cytoplasmic capsids. This enzyme displays a DNA polymerase activity that can copy either DNA or RNA templates, and a ribonuclease H (RNase H) activity that cleaves the RNA strand of RNA-DNA heteroduplexes in a partially processive 3'- to 5'-endonucleasic mode. Neo-synthesized pregenomic RNA (pgRNA) are encapsidated together with the P protein, and reverse-transcribed inside the nucleocapsid. Initiation of reverse-transcription occurs first by binding the epsilon loop on the pgRNA genome, and is initiated by protein priming, thereby the 5'-end of (-)DNA is covalently linked to P protein. Partial (+)DNA is synthesized from the (-)DNA template and generates the relaxed circular DNA (RC-DNA) genome. After budding and infection, the RC-DNA migrates in the nucleus, and is converted into a plasmid-like covalently closed circular DNA (cccDNA). The activity of P protein does not seem to be necessary for cccDNA generation, and is presumably released from (+)DNA by host nuclear DNA repair machinery. This chain is Protein P, found in Homo sapiens (Human).